Consider the following 671-residue polypeptide: Zinc finger protein 750 (671 aa).

Residues 25–51 form a CCHC-type zinc finger; that stretch reads YKCFQCPFTCNEKSHLFNHMKYGLCKN. Zn(2+) contacts are provided by cysteine 27, cysteine 30, histidine 43, and cysteine 49. 3 disordered regions span residues 66–87, 366–433, and 592–671; these read PKVN…SPVP, ETSP…KDFT, and SSPG…PRVS. 2 stretches are compositionally biased toward polar residues: residues 67 to 78 and 402 to 412; these read KVNSTDQKQPSN and SPTNFTQNSQG.

Its subcellular location is the nucleus. In terms of biological role, transcription factor involved in epidermis differentiation. This chain is Zinc finger protein 750 (znf750), found in Xenopus tropicalis (Western clawed frog).